Here is a 256-residue protein sequence, read N- to C-terminus: Small ribosomal subunit protein uS2 (256 aa).

Belongs to the universal ribosomal protein uS2 family.

This Streptococcus agalactiae serotype III (strain NEM316) protein is Small ribosomal subunit protein uS2.